The chain runs to 184 residues: MSWRSESIWIELRTGSRKTSNFFWAFILFLGSLGFLLVGTSSYLGRNVISLFPSQQIIFFPQGIVMSFYGIAGLFISCYLWCTILWNVGSGYDLFDRKEGIVRIFRWGFPGKSRRIFLRFLMKDIQSIRIEVKEGISARRVLYMEIRGQGAIPLIRTDENFTTREIEQKAAELAYFLRVPIEVF.

The next 2 helical transmembrane spans lie at 22-42 and 57-77; these read FFWAFILFLGSLGFLLVGTSS and IIFFPQGIVMSFYGIAGLFIS.

The protein belongs to the Ycf4 family.

It is found in the plastid. The protein localises to the chloroplast thylakoid membrane. In terms of biological role, seems to be required for the assembly of the photosystem I complex. The protein is Photosystem I assembly protein Ycf4 of Aethionema cordifolium (Lebanon stonecress).